Reading from the N-terminus, the 496-residue chain is Lysine--tRNA ligase (496 aa).

Glutamate 409 and glutamate 416 together coordinate Mg(2+).

It belongs to the class-II aminoacyl-tRNA synthetase family. In terms of assembly, homodimer. Mg(2+) serves as cofactor.

The protein localises to the cytoplasm. It catalyses the reaction tRNA(Lys) + L-lysine + ATP = L-lysyl-tRNA(Lys) + AMP + diphosphate. The protein is Lysine--tRNA ligase of Streptococcus pneumoniae serotype 19F (strain G54).